We begin with the raw amino-acid sequence, 200 residues long: Histone H1 (200 aa).

The segment covering 1–14 (MPPKKAPTTAKKAA) has biased composition (low complexity). 2 disordered regions span residues 1–20 (MPPK…PTHT) and 78–200 (DFIQ…NKKA). The H15 domain occupies 18-93 (THTSYRDMIK…GTSGPVKLAK (76 aa)). A compositionally biased stretch (low complexity) spans 94–116 (KQAPAKPAPKKPATTTKTAAPKK). Positions 120–131 (KKADKAEKAEKP) are enriched in basic and acidic residues. The span at 159-185 (TAAPAVVDKPKVVSVTKSGRKTTTTAK) shows a compositional bias: low complexity.

It belongs to the histone H1/H5 family.

Its subcellular location is the nucleus. The protein localises to the chromosome. In terms of biological role, could act as an H1-type linker histone. This Emericella nidulans (strain FGSC A4 / ATCC 38163 / CBS 112.46 / NRRL 194 / M139) (Aspergillus nidulans) protein is Histone H1 (hhoA).